The following is a 252-amino-acid chain: Imidazole glycerol phosphate synthase subunit HisF (252 aa).

Active-site residues include Asp-11 and Asp-130.

This sequence belongs to the HisA/HisF family. As to quaternary structure, heterodimer of HisH and HisF.

The protein localises to the cytoplasm. It catalyses the reaction 5-[(5-phospho-1-deoxy-D-ribulos-1-ylimino)methylamino]-1-(5-phospho-beta-D-ribosyl)imidazole-4-carboxamide + L-glutamine = D-erythro-1-(imidazol-4-yl)glycerol 3-phosphate + 5-amino-1-(5-phospho-beta-D-ribosyl)imidazole-4-carboxamide + L-glutamate + H(+). Its pathway is amino-acid biosynthesis; L-histidine biosynthesis; L-histidine from 5-phospho-alpha-D-ribose 1-diphosphate: step 5/9. IGPS catalyzes the conversion of PRFAR and glutamine to IGP, AICAR and glutamate. The HisF subunit catalyzes the cyclization activity that produces IGP and AICAR from PRFAR using the ammonia provided by the HisH subunit. This chain is Imidazole glycerol phosphate synthase subunit HisF, found in Bacillus cereus (strain AH187).